The primary structure comprises 2225 residues: Genome polyprotein (2225 aa).

2 short sequence motifs ((L)YPX(n)L motif) span residues 167 to 171 (YPHGL) and 200 to 205 (YPVWEL). The segment at 766 to 836 (MMSRIAAGDL…PRKMKGLFSQ (71 aa)) is involved in P1-2A pentamerization. The helical transmembrane segment at 1011 to 1031 (TVDIVNIVLCFVKSGILLYVI) threads the bilayer. Residues 1043-1070 (IGLLRVMNYADIGCSVISCGKVFSKMLE) are membrane-penetrating ability. Residues 1127 to 1152 (KKKDVLNVLKDNQQRIERAIEEADNF) are a coiled coil. The region spanning 1204 to 1366 (HQKLKNLGSI…SFFQNPHNDM (163 aa)) is the SF3 helicase domain. 1230–1237 (GKRGGGKS) lines the ATP pocket. Residues 1460 to 1480 (WVAVGAAVGILGVLVGGWFVY) traverse the membrane as a helical segment. Position 1497 is an O-(5'-phospho-RNA)-tyrosine (Tyr1497). Positions 1512–1726 (DPVESQSTLE…VAKLVTQEMF (215 aa)) constitute a Peptidase C3 domain. Catalysis depends on for protease 3C activity residues His1561, Asp1601, and Cys1689. Positions 1974–2095 (DVGLDLDFSA…VFSRDIQIDN (122 aa)) constitute a RdRp catalytic domain.

The protein belongs to the picornaviridae polyprotein family. As to quaternary structure, homodimer. Homomultimer; probably interacts with membranes in a multimeric form. Seems to assemble into amyloid-like fibers. In terms of assembly, homodimer. Monomer. Interacts with protein 3CD. Interacts with host ACBD3. As to quaternary structure, interacts with protein 3AB. In terms of assembly, interacts with human MAVS. Homodimer; disulfide-linked. As to quaternary structure, homopentamer. Homooligomer. In terms of assembly, interacts with capsid protein VP2. Interacts with capsid protein VP3. Interacts with capsid protein VP1. Interacts with capsid protein VP3. As to quaternary structure, interacts with capsid protein VP1. Interacts with capsid protein VP2. Specific enzymatic cleavages by viral protease in vivo yield a variety of precursors and mature proteins. Polyprotein processing intermediates are produced, such as P1-2A which is a functional precursor of the structural proteins, VP0 which is a VP4-VP2 precursor, VP1-2A precursor, 3ABC precursor which is a stable and catalytically active precursor of 3A, 3B and 3C proteins, 3AB and 3CD precursors. The assembly signal 2A is removed from VP1-2A by a host protease, possibly host Cathepsin L. This cleavage occurs over a region of 3 amino-acids probably generating VP1 proteins with heterogeneous C-termini. In terms of processing, during virion maturation, immature virions are rendered infectious following cleavage of VP0 into VP4 and VP2. This maturation seems to be an autocatalytic event triggered by the presence of RNA in the capsid and is followed by a conformational change of the particle. Post-translationally, the assembly signal 2A is removed from VP1-2A by a host protease, possibly host Cathepsin L in naked virions. This cleavage does not occur in enveloped virions. This cleavage occurs over a region of 3 amino-acids probably generating VP1 proteins with heterogeneous C-termini. VPg is uridylylated prior to priming replication into VPg-pUpU. In terms of processing, unlike other picornaviruses, does not seem to be myristoylated.

It is found in the virion. It localises to the host endosome. The protein resides in the host multivesicular body. The protein localises to the host membrane. Its subcellular location is the host mitochondrion outer membrane. It is found in the host cytoplasm. It localises to the host cytoplasmic vesicle membrane. It carries out the reaction RNA(n) + a ribonucleoside 5'-triphosphate = RNA(n+1) + diphosphate. The catalysed reaction is a ribonucleoside 5'-triphosphate + H2O = a ribonucleoside 5'-diphosphate + phosphate + H(+). It catalyses the reaction Selective cleavage of Gln-|-Gly bond in the poliovirus polyprotein. In other picornavirus reactions Glu may be substituted for Gln, and Ser or Thr for Gly.. Capsid proteins VP1, VP2, and VP3 form a closed capsid enclosing the viral positive strand RNA genome. All these proteins contain a beta-sheet structure called beta-barrel jelly roll. Together they form an icosahedral capsid (T=3) composed of 60 copies of each VP1, VP2, and VP3, with a diameter of approximately 300 Angstroms. VP1 is situated at the 12 fivefold axes, whereas VP2 and VP3 are located at the quasi-sixfold axes. The naked capsid interacts with the host receptor HAVCR1 to provide virion attachment to and probably entry into the target cell. Its function is as follows. VP0 precursor is a component of the immature procapsids. Functionally, plays a role in the assembly of the 12 pentamers into an icosahedral structure. Has not been detected in mature virions, supposedly owing to its small size. In terms of biological role, precursor component of immature procapsids that corresponds to an extended form of the structural protein VP1. After maturation, possibly by the host Cathepsin L, the assembly signal 2A is cleaved to give rise to the mature VP1 protein. Functions as a viroporin. Affects membrane integrity and causes an increase in membrane permeability. Involved in host intracellular membrane rearrangements probably to give rise to the viral factories. Does not disrupt calcium homeostasis or glycoprotein trafficking. Antagonizes the innate immune response of the host by suppressing IFN-beta synthesis, which it achieves by interfering with the RIG-I/IFIH1 pathway. Its function is as follows. Affects membrane integrity and causes an increase in membrane permeability. Functionally, associates with and induces structural rearrangements of intracellular membranes. Displays RNA-binding activity. In terms of biological role, the precursor 3ABC is targeted to the mitochondrial membrane where protease 3C activity cleaves and inhibits the host antiviral protein MAVS, thereby disrupting activation of IRF3 through the IFIH1/MDA5 pathway. In vivo, the protease activity of 3ABC precursor is more efficient in cleaving the 2BC precursor than that of protein 3C. The 3ABC precursor may therefore play a role in the proteolytic processing of the polyprotein. Possible viroporin. Interacts with the 3CD precursor and with RNA structures found at both the 5'- and 3'-termini of the viral genome. Since the 3AB precursor contains the hydrophobic domain 3A, it probably anchors the whole viral replicase complex to intracellular membranes on which viral RNA synthesis occurs. Its function is as follows. May serve as membrane anchor to the 3AB and 3ABC precursors via its hydrophobic domain. May interact with RNA. Functionally, acts as a primer for viral RNA replication and remains covalently bound to viral genomic RNA. VPg is uridylylated prior to priming replication into VPg-pUpU. The VPg-pUpU is then used as primer on the genomic RNA poly(A) by the RNA-dependent RNA polymerase to replicate the viral genome. In terms of biological role, cysteine protease that generates mature viral proteins from the precursor polyprotein. In addition to its proteolytic activity, it binds to viral RNA, and thus influences viral genome replication. RNA and substrate bind cooperatively to the protease. Cleaves IKBKG/NEMO to impair innate immune signaling. Cleaves host PABPC1 which may participate in the switch of viral translation to RNA synthesis. Interacts with the 3AB precursor and with RNA structures found at both the 5'- and 3'-termini of the viral genome. Disrupts TLR3 signaling by degrading the host adapter protein TICAM1/TRIF. Its function is as follows. RNA-directed RNA polymerase 3D-POL replicates genomic and antigenomic RNA by recognizing replications specific signals. The chain is Genome polyprotein from Homo sapiens (Human).